The chain runs to 285 residues: Protein phosphatase 1 regulatory subunit 3B (285 aa).

The PP1-binding motif motif lies at 62-65 (RVSF). The 109-residue stretch at 125-233 (RNRLQADHVC…SNRGKNYRII (109 aa)) folds into the CBM21 domain. Residue S261 is modified to Phosphoserine.

In terms of assembly, interacts with glycogen, PPP1CC catalytic subunit of PP1 and PYGL. Associates with glycogen particles. Forms complexes with debranching enzyme, glycogen phosphorylase, glycogen synthase and phosphorylase kinase which is necessary for its regulation of PP1 activity. As to expression, highly expressed in the liver and, at lower levels, in skeletal muscle, including in vastus lateralis, gastrocnemius and soleus (at protein level). Highest mRNA levels are observed in skeletal muscle, and only moderate levels in liver and heart. Weak expression in placenta and lung.

Its function is as follows. Acts as a glycogen-targeting subunit for phosphatase PP1. Facilitates interaction of the PP1 with enzymes of the glycogen metabolism and regulates its activity. Suppresses the rate at which PP1 dephosphorylates (inactivates) glycogen phosphorylase and enhances the rate at which it activates glycogen synthase and therefore limits glycogen breakdown. Its activity is inhibited by PYGL, resulting in inhibition of the glycogen synthase and glycogen phosphorylase phosphatase activities of PP1. Dramatically increases basal and insulin-stimulated glycogen synthesis upon overexpression in hepatocytes. The chain is Protein phosphatase 1 regulatory subunit 3B (PPP1R3B) from Homo sapiens (Human).